A 169-amino-acid chain; its full sequence is MSLVSPSPDSNAVMAGDQDASTSQVPSQSESKIGPNVATQTLRKPTMSKVILRTVADKGVHSRVSLAALKKAVSITGYNMAQNTWRFKRVLQNLVKKGMLKQVTGKGASGSFRLGKKQAFKSKCKAKRRQRRQKPGQRRTGSRRSLLGSKKSNNRLFKGVRRVAKGRRH.

Composition is skewed to polar residues over residues 1–10 (MSLVSPSPDS) and 19–36 (DAST…IGPN). A disordered region spans residues 1–36 (MSLVSPSPDSNAVMAGDQDASTSQVPSQSESKIGPN). Positions 43–116 (RKPTMSKVIL…GASGSFRLGK (74 aa)) constitute an H15 domain. A phosphoserine mark is found at S62 and S65. Basic residues predominate over residues 118–142 (QAFKSKCKAKRRQRRQKPGQRRTGS). The segment at 118–154 (QAFKSKCKAKRRQRRQKPGQRRTGSRRSLLGSKKSNN) is disordered.

This sequence belongs to the histone H1/H5 family.

The protein localises to the nucleus. Its subcellular location is the chromosome. Its function is as follows. DNA-binding protein that may be implicated in chromatin remodeling and/or transcriptional regulation during spermiogenesis, the process of spermatid maturation into spermatozoa. This is Histone H1.9 from Rattus norvegicus (Rat).